Reading from the N-terminus, the 584-residue chain is MNKLYIGNLGENVSPLDLESLFKDSKIPFSGQFLVKTGYAFVDCPDESWAMKAIEALSGKVELHGKLIEVEHSVPKRQRSRKLQIRNIPPHLQWEVLDSLLAQYGTVENCEQVNTDTETAVVNVTYGNKDQARQAIEKLNGFQLENYSLKVAYIPDEMAAQQPPQQHPQGRRGFGQRGPPRQGSPSATTRQKPQSDVPLRMLVPTQFVGAIIGKEGATIRNITKQTQSKIDIHRKENAGAAEKPITIHSTPEGCSTACKIIMEIMQKEAQDTKFTEEIPLKILAHNNFVGRLIGKEGRNLKKIEQDTDTKITISPLQDLTLYNPERTITVKGSIETCAKAEEEIMKKIRESYENDIAAMNLQAHLIPGLNLNALGLFPPSSSGIPPPAVSVASAAAAASYPPFGQQPESETVHLFIPALAVGAIIGKQGQHIKQLSRFAGASIKIAPAEGPDAKLRMVIITGPPEAQFKAQGRIYGKLKEENFFGPKEEVKLEAHIKVPSYAAGRVIGKGGKTVNELQNLTSAEVVVPRDQTPDENDQVVVKITGHFYACQLAQRKIQEILAQVRRQQQQQKTLQSGQPQPRRK.

2 RRM domains span residues 2 to 75 (NKLY…HSVP) and 81 to 156 (RKLQ…YIPD). The disordered stretch occupies residues 160 to 199 (AQQPPQQHPQGRRGFGQRGPPRQGSPSATTRQKPQSDVPL). Residues 184–194 (SPSATTRQKPQ) are compositionally biased toward polar residues. KH domains follow at residues 196–261 (DVPL…CKII), 277–344 (EIPL…EEEI), 409–474 (SETV…QGRI), and 491–557 (KLEA…QRKI).

This sequence belongs to the RRM IMP/VICKZ family. As to quaternary structure, homodimer and multimer.

It localises to the cytoplasm. Its subcellular location is the nucleus. The protein localises to the P-body. The protein resides in the stress granule. RNA-binding factor that may recruit target transcripts to cytoplasmic protein-RNA complexes (mRNPs). This transcript 'caging' into mRNPs allows mRNA transport and transient storage. It also modulates the rate and location at which target transcripts encounter the translational apparatus and shields them from endonuclease attacks or microRNA-mediated degradation. Preferentially binds to N6-methyladenosine (m6A)-containing mRNAs and increases their stability. In Gallus gallus (Chicken), this protein is Insulin-like growth factor 2 mRNA-binding protein 3 (IGF2BP3).